The chain runs to 541 residues: Glucans biosynthesis protein D (541 aa).

Residues methionine 1–alanine 29 constitute a signal peptide (tat-type signal).

This sequence belongs to the OpgD/OpgG family. Predicted to be exported by the Tat system. The position of the signal peptide cleavage has not been experimentally proven.

The protein resides in the periplasm. The protein operates within glycan metabolism; osmoregulated periplasmic glucan (OPG) biosynthesis. In terms of biological role, probably involved in the control of the structural glucose backbone of osmoregulated periplasmic glucans (OPGs). The protein is Glucans biosynthesis protein D of Pseudomonas fluorescens (strain SBW25).